A 508-amino-acid chain; its full sequence is Transposase (508 aa).

The region spanning 3-65 (LLSVIRRWHF…PFADRLSAWL (63 aa)) is the HTH IS21-type domain. Residues 124-299 (LAFEPGEAFQ…TIADIWVEEV (176 aa)) enclose the Integrase catalytic domain.

This sequence belongs to the transposase IS21/IS408/IS1162 family.

In terms of biological role, required for the transposition of the insertion element. This Aminobacter aminovorans (Chelatobacter heintzii) protein is Transposase (nmoT).